A 493-amino-acid polypeptide reads, in one-letter code: Tripartite motif-containing protein 5 (493 aa).

Residue Ala2 is modified to N-acetylalanine. The segment at 15–59 (CPICLELLTQPLSLDCGHSFCQACLTANHKKSMLDKGESSCPVCR) adopts an RING-type zinc-finger fold. Phosphoserine is present on Ser86. A B box-type zinc finger spans residues 90–132 (QKVDHCARHGEKLLLFCQEDGKVICWLCERSQEHRGHHTFLTE). Zn(2+) contacts are provided by Cys95, His98, Cys117, and His123. Positions 130–241 (LTEEVAREYQ…ISDLEHRLQG (112 aa)) form a coiled coil. The interval 185 to 198 (FEQLRDILDWEESN) is required for interaction with GABARAP and for autophagy. Residues 281–493 (LKGMLEVFRE…VPMTLCSPSS (213 aa)) form the B30.2/SPRY domain.

Belongs to the TRIM/RBCC family. As to quaternary structure, can form homodimers and homotrimers. In addition to lower-order dimerization, also exhibits a higher-order multimerization and both low- and high-order multimerizations are essential for its restriction activity. Isoform Delta interacts with BTBD1 and BTBD2. Interacts with PSMC4, PSMC5, PSMD7 and HSPA8/HSC70. Interacts (via B30.2/SPRY domain) with HSPA1A/B. Interacts with PSMC2, MAP3K7/TAK1, TAB2 and TAB3. Interacts with SQSTM1. Interacts with TRIM6 and TRIM34. Interacts with ULK1 (phosphorylated form), GABARAP, GABARAPL1, GABARAPL2, MAP1LC3A, MAP1LC3C and BECN1. Post-translationally, degraded in a proteasome-independent fashion in the absence of viral infection but in a proteasome-dependent fashion following exposure to restriction sensitive virus. In terms of processing, autoubiquitinated in a RING finger- and UBE2D2-dependent manner. Monoubiquitinated by TRIM21. Deubiquitinated by Yersinia YopJ. Ubiquitination may not lead to proteasomal degradation.

It localises to the cytoplasm. Its subcellular location is the nucleus. The catalysed reaction is S-ubiquitinyl-[E2 ubiquitin-conjugating enzyme]-L-cysteine + [acceptor protein]-L-lysine = [E2 ubiquitin-conjugating enzyme]-L-cysteine + N(6)-ubiquitinyl-[acceptor protein]-L-lysine.. Its pathway is protein modification; protein ubiquitination. Capsid-specific restriction factor that prevents infection from non-host-adapted retroviruses. Blocks viral replication early in the life cycle, after viral entry but before reverse transcription. In addition to acting as a capsid-specific restriction factor, also acts as a pattern recognition receptor that activates innate immune signaling in response to the retroviral capsid lattice. Binding to the viral capsid triggers its E3 ubiquitin ligase activity, and in concert with the heterodimeric ubiquitin conjugating enzyme complex UBE2V1-UBE2N (also known as UBC13-UEV1A complex) generates 'Lys-63'-linked polyubiquitin chains, which in turn are catalysts in the autophosphorylation of the MAP3K7/TAK1 complex (includes TAK1, TAB2, and TAB3). Activation of the MAP3K7/TAK1 complex by autophosphorylation results in the induction and expression of NF-kappa-B and MAPK-responsive inflammatory genes, thereby leading to an innate immune response in the infected cell. Restricts infection by N-tropic murine leukemia virus (N-MLV), equine infectious anemia virus (EIAV), simian immunodeficiency virus of macaques (SIVmac), feline immunodeficiency virus (FIV), and bovine immunodeficiency virus (BIV). Plays a role in regulating autophagy through activation of autophagy regulator BECN1 by causing its dissociation from its inhibitors BCL2 and TAB2. Also plays a role in autophagy by acting as a selective autophagy receptor which recognizes and targets HIV-1 capsid protein p24 for autophagic destruction. This Homo sapiens (Human) protein is Tripartite motif-containing protein 5 (TRIM5).